The sequence spans 133 residues: Small ribosomal subunit protein uS8 (133 aa).

It belongs to the universal ribosomal protein uS8 family. As to quaternary structure, part of the 30S ribosomal subunit. Contacts proteins S5 and S12.

In terms of biological role, one of the primary rRNA binding proteins, it binds directly to 16S rRNA central domain where it helps coordinate assembly of the platform of the 30S subunit. This Prochlorococcus marinus (strain MIT 9301) protein is Small ribosomal subunit protein uS8.